We begin with the raw amino-acid sequence, 430 residues long: Phosphomethylpyrimidine synthase (430 aa).

Substrate contacts are provided by residues Asn67, Met96, Tyr125, His161, 183–185 (SRG), 224–227 (DALR), and Glu263. His267 is a binding site for Zn(2+). Tyr290 lines the substrate pocket. Position 331 (His331) interacts with Zn(2+). Residues Cys406, Cys409, and Cys413 each coordinate [4Fe-4S] cluster.

This sequence belongs to the ThiC family. In terms of assembly, homodimer. It depends on [4Fe-4S] cluster as a cofactor.

It catalyses the reaction 5-amino-1-(5-phospho-beta-D-ribosyl)imidazole + S-adenosyl-L-methionine = 4-amino-2-methyl-5-(phosphooxymethyl)pyrimidine + CO + 5'-deoxyadenosine + formate + L-methionine + 3 H(+). It functions in the pathway cofactor biosynthesis; thiamine diphosphate biosynthesis. Functionally, catalyzes the synthesis of the hydroxymethylpyrimidine phosphate (HMP-P) moiety of thiamine from aminoimidazole ribotide (AIR) in a radical S-adenosyl-L-methionine (SAM)-dependent reaction. The sequence is that of Phosphomethylpyrimidine synthase from Campylobacter jejuni (strain RM1221).